A 1168-amino-acid polypeptide reads, in one-letter code: DNA-directed RNA polymerase subunit beta (1168 aa).

It belongs to the RNA polymerase beta chain family. The RNAP catalytic core consists of 2 alpha, 1 beta, 1 beta' and 1 omega subunit. When a sigma factor is associated with the core the holoenzyme is formed, which can initiate transcription.

The enzyme catalyses RNA(n) + a ribonucleoside 5'-triphosphate = RNA(n+1) + diphosphate. Functionally, DNA-dependent RNA polymerase catalyzes the transcription of DNA into RNA using the four ribonucleoside triphosphates as substrates. The chain is DNA-directed RNA polymerase subunit beta from Rhodococcus jostii (strain RHA1).